A 434-amino-acid chain; its full sequence is MKLIEAIDNNNLKEVIRIIRSDNINLESINDEDDLSPLHHAVSRGYKEIVISMLEHGADVNLCNDEVCSPLHIAIKNDNVEMVQLLIDNGADTDCCNNTIHGTPLQCAILNENYRITDALLESGADTHEIYTKNHPIIEAIKLDNLPLVRLLLRHGADVNTFDPLYGYPIHLAIRYGNIDIIKELLYHGVIESYSLYPSLLHQSIMCNNKEVVLLLISMGFDVNAKDNEGNTPMHLAVQKNLVGIVKILLDKGADTSIINNLSVTCLRSCYVYGNNSTEILQLLISRIVINKYANIPCRSIAGMNYNWSLIESNQKTNSYKLECEKEILKMLDVKIGSRSLFDIYLNKIESNMLLRLYNKVTLPEFIIYKDIIINAVYTAKERESLISKSFTVLEDTISNDTIDNLWKNIPIEVKYMILRYLGKDDLYNIVNSV.

ANK repeat units lie at residues 33-62, 66-95, 101-131, 132-161, 165-195, 196-225, and 229-258; these read DDLS…DVNL, EVCS…DTDC, HGTP…HEIY, TKNH…DVNT, LYGY…ESYS, LYPS…DVNA, and EGNT…DTSI.

The sequence is that of Putative ankyrin repeat protein FPV219 from Fowlpox virus (strain NVSL) (FPV).